The following is a 156-amino-acid chain: 6,7-dimethyl-8-ribityllumazine synthase (156 aa).

5-amino-6-(D-ribitylamino)uracil contacts are provided by residues Phe22, 57–59, and 81–83; these read AVE and SVI. A (2S)-2-hydroxy-3-oxobutyl phosphate-binding site is contributed by 86–87; sequence GT. Catalysis depends on His89, which acts as the Proton donor. Phe114 lines the 5-amino-6-(D-ribitylamino)uracil pocket. Arg128 lines the (2S)-2-hydroxy-3-oxobutyl phosphate pocket.

This sequence belongs to the DMRL synthase family. As to quaternary structure, forms an icosahedral capsid composed of 60 subunits, arranged as a dodecamer of pentamers.

The catalysed reaction is (2S)-2-hydroxy-3-oxobutyl phosphate + 5-amino-6-(D-ribitylamino)uracil = 6,7-dimethyl-8-(1-D-ribityl)lumazine + phosphate + 2 H2O + H(+). It functions in the pathway cofactor biosynthesis; riboflavin biosynthesis; riboflavin from 2-hydroxy-3-oxobutyl phosphate and 5-amino-6-(D-ribitylamino)uracil: step 1/2. Its function is as follows. Catalyzes the formation of 6,7-dimethyl-8-ribityllumazine by condensation of 5-amino-6-(D-ribitylamino)uracil with 3,4-dihydroxy-2-butanone 4-phosphate. This is the penultimate step in the biosynthesis of riboflavin. This is 6,7-dimethyl-8-ribityllumazine synthase from Vibrio vulnificus (strain CMCP6).